An 873-amino-acid polypeptide reads, in one-letter code: Alanine--tRNA ligase (873 aa).

Zn(2+)-binding residues include His557, His561, Cys659, and His663.

Belongs to the class-II aminoacyl-tRNA synthetase family. The cofactor is Zn(2+).

Its subcellular location is the cytoplasm. The enzyme catalyses tRNA(Ala) + L-alanine + ATP = L-alanyl-tRNA(Ala) + AMP + diphosphate. In terms of biological role, catalyzes the attachment of alanine to tRNA(Ala) in a two-step reaction: alanine is first activated by ATP to form Ala-AMP and then transferred to the acceptor end of tRNA(Ala). Also edits incorrectly charged Ser-tRNA(Ala) and Gly-tRNA(Ala) via its editing domain. This Nitrosococcus oceani (strain ATCC 19707 / BCRC 17464 / JCM 30415 / NCIMB 11848 / C-107) protein is Alanine--tRNA ligase.